The sequence spans 290 residues: Glutaredoxin domain-containing cysteine-rich protein 1 (290 aa).

The region spanning Leu127–Gln234 is the Glutaredoxin domain.

Belongs to the GRXCR1 family. As to expression, expressed at low levels in adult lung, brain and duodenum with moderate levels in testis. Highly expressed in fetal cochlea.

It is found in the cell projection. Its subcellular location is the stereocilium. The protein resides in the microvillus. It localises to the kinocilium. In terms of biological role, may play a role in actin filament architecture in developing stereocilia of sensory cells. This is Glutaredoxin domain-containing cysteine-rich protein 1 (GRXCR1) from Homo sapiens (Human).